A 458-amino-acid polypeptide reads, in one-letter code: UDP-N-acetylmuramoylalanine--D-glutamate ligase (458 aa).

118-124 (GTNGKTT) lines the ATP pocket.

This sequence belongs to the MurCDEF family.

It is found in the cytoplasm. The catalysed reaction is UDP-N-acetyl-alpha-D-muramoyl-L-alanine + D-glutamate + ATP = UDP-N-acetyl-alpha-D-muramoyl-L-alanyl-D-glutamate + ADP + phosphate + H(+). It functions in the pathway cell wall biogenesis; peptidoglycan biosynthesis. Functionally, cell wall formation. Catalyzes the addition of glutamate to the nucleotide precursor UDP-N-acetylmuramoyl-L-alanine (UMA). The protein is UDP-N-acetylmuramoylalanine--D-glutamate ligase of Ligilactobacillus salivarius (strain UCC118) (Lactobacillus salivarius).